Reading from the N-terminus, the 292-residue chain is Tetratricopeptide repeat protein 1 (292 aa).

The tract at residues 20-125 is disordered; the sequence is TDPQEAECLH…SSRLKEEGNE (106 aa). Basic and acidic residues-rich tracts occupy residues 36-49 and 75-85; these read KEQH…KDVD and GADKLENKPED. Residues 86-98 are compositionally biased toward acidic residues; that stretch reads DMNPSELDEEYLM. Ser-90 carries the post-translational modification Phosphoserine. Over residues 99-125 the composition is skewed to basic and acidic residues; sequence ELEKNMPDEEKKRRREESSRLKEEGNE. TPR repeat units lie at residues 116–149, 155–188, and 189–222; these read SSRL…CPSC, SVLF…NPSY, and IRAI…DPSV.

As to quaternary structure, interacts with the GAP domain of NF1. Interacts (via TPR repeats) with HSP90AA1 and HSPA8.

In Bos taurus (Bovine), this protein is Tetratricopeptide repeat protein 1 (TTC1).